We begin with the raw amino-acid sequence, 61 residues long: Large ribosomal subunit protein bL32 (61 aa).

This sequence belongs to the bacterial ribosomal protein bL32 family.

This Syntrophus aciditrophicus (strain SB) protein is Large ribosomal subunit protein bL32.